Reading from the N-terminus, the 209-residue chain is BAG family molecular chaperone regulator 1 (209 aa).

Residues 7 to 84 (CSSVQTIVDI…IIVMGGKNAM (78 aa)) enclose the Ubiquitin-like domain. One can recognise a BAG domain in the interval 107–193 (TYDVNLKDVA…TLLNQNDALL (87 aa)).

As to quaternary structure, homodimer or homotetramer.

Functionally, may inhibit the chaperone activity of HSP70/HSC70 by promoting substrate release in an ATP-dependent manner. The sequence is that of BAG family molecular chaperone regulator 1 (bag-1) from Caenorhabditis briggsae.